The primary structure comprises 84 residues: MAHKKGAASTKNGRDSNSQRLGVKRYGGQVVNAGEIIVRQRGTHFHPGSGVGRGGDDTLFALVAGAVQFGTRRGRRVVNIVPGE.

Residues 1–24 (MAHKKGAASTKNGRDSNSQRLGVK) form a disordered region. A compositionally biased stretch (polar residues) spans 9–20 (STKNGRDSNSQR).

It belongs to the bacterial ribosomal protein bL27 family.

In Nocardioides sp. (strain ATCC BAA-499 / JS614), this protein is Large ribosomal subunit protein bL27.